The primary structure comprises 151 residues: Ribosome maturation factor RimP (151 aa).

This sequence belongs to the RimP family.

It localises to the cytoplasm. Required for maturation of 30S ribosomal subunits. This is Ribosome maturation factor RimP from Pseudoalteromonas translucida (strain TAC 125).